A 287-amino-acid polypeptide reads, in one-letter code: Small ribosomal subunit biogenesis GTPase RsgA (287 aa).

A CP-type G domain is found at 61 to 218; sequence SSELIRPTVA…LVDTPGFTTL (158 aa). GTP is bound by residues 110–113 and 161–169; these read NKED and GPSGAGKST. Residues C242, C247, H249, and C255 each contribute to the Zn(2+) site.

The protein belongs to the TRAFAC class YlqF/YawG GTPase family. RsgA subfamily. Monomer. Associates with 30S ribosomal subunit, binds 16S rRNA. Requires Zn(2+) as cofactor.

The protein localises to the cytoplasm. One of several proteins that assist in the late maturation steps of the functional core of the 30S ribosomal subunit. Helps release RbfA from mature subunits. May play a role in the assembly of ribosomal proteins into the subunit. Circularly permuted GTPase that catalyzes slow GTP hydrolysis, GTPase activity is stimulated by the 30S ribosomal subunit. The polypeptide is Small ribosomal subunit biogenesis GTPase RsgA (Clostridium perfringens (strain ATCC 13124 / DSM 756 / JCM 1290 / NCIMB 6125 / NCTC 8237 / Type A)).